Reading from the N-terminus, the 152-residue chain is ADP-ribose glycohydrolase OARD1 (152 aa).

An N-acetylalanine modification is found at A2. The Macro domain maps to 2–152; sequence AGSPNEDSEG…TDIRITVYTL (151 aa). The residue at position 4 (S4) is a Phosphoserine. A substrate-binding site is contributed by L21. K84 (nucleophile) is an active-site residue. Substrate is bound by residues 119–125 and L152; that span reads RIGCGLD. D125 functions as the Proton acceptor in the catalytic mechanism.

The protein localises to the nucleus. It localises to the nucleoplasm. The protein resides in the nucleolus. Its subcellular location is the chromosome. It catalyses the reaction 2''-O-acetyl-ADP-D-ribose + H2O = ADP-D-ribose + acetate + H(+). The catalysed reaction is 5-O-(ADP-D-ribosyl)-L-glutamyl-[protein] + H2O = L-glutamyl-[protein] + ADP-D-ribose + H(+). It carries out the reaction alpha-NAD(+) + H2O = ADP-D-ribose + nicotinamide + H(+). Subject to competitive inhibition by the product ADP-ribose. ADP-ribose glycohydrolase that hydrolyzes ADP-ribose and acts on different substrates, such as proteins ADP-ribosylated on glutamate and O-acetyl-ADP-D-ribose. Specifically acts as a glutamate mono-ADP-ribosylhydrolase by mediating the removal of mono-ADP-ribose attached to glutamate residues on proteins. Does not act on poly-ADP-ribosylated proteins: the poly-ADP-ribose chain of poly-ADP-ribosylated glutamate residues must by hydrolyzed into mono-ADP-ribosylated glutamate by PARG to become a substrate for OARD1. Deacetylates O-acetyl-ADP ribose, a signaling molecule generated by the deacetylation of acetylated lysine residues in histones and other proteins. Catalyzes the deacylation of O-acetyl-ADP-ribose, O-propionyl-ADP-ribose and O-butyryl-ADP-ribose, yielding ADP-ribose plus acetate, propionate and butyrate, respectively. This chain is ADP-ribose glycohydrolase OARD1, found in Bos taurus (Bovine).